A 356-amino-acid chain; its full sequence is Histidinol-phosphate aminotransferase (356 aa).

Residue Lys-222 is modified to N6-(pyridoxal phosphate)lysine.

Belongs to the class-II pyridoxal-phosphate-dependent aminotransferase family. Histidinol-phosphate aminotransferase subfamily. As to quaternary structure, homodimer. Pyridoxal 5'-phosphate serves as cofactor.

The catalysed reaction is L-histidinol phosphate + 2-oxoglutarate = 3-(imidazol-4-yl)-2-oxopropyl phosphate + L-glutamate. It functions in the pathway amino-acid biosynthesis; L-histidine biosynthesis; L-histidine from 5-phospho-alpha-D-ribose 1-diphosphate: step 7/9. The polypeptide is Histidinol-phosphate aminotransferase (Lactiplantibacillus plantarum (strain ATCC BAA-793 / NCIMB 8826 / WCFS1) (Lactobacillus plantarum)).